Reading from the N-terminus, the 127-residue chain is Cliotide T3 (127 aa).

Positions 1-24 are cleaved as a signal peptide; that stretch reads MAYVRLTSLAVLFFLAASVMKTEG. The segment at residues 25–53 is a cross-link (cyclopeptide (Gly-Asn)); that stretch reads GLPTCGETCTLGTCYVPDCSCSWPICMKN. Disulfide bonds link Cys-29–Cys-43, Cys-33–Cys-45, and Cys-38–Cys-50. The propeptide at 54 to 127 is removed in mature form; the sequence is HIIAANAKTV…DLKMPLESTN (74 aa).

Post-translationally, contains 3 disulfide bonds. In terms of processing, this is a cyclic peptide. Expressed in flower, stem, shoot, leaf and seed but not in root, pod and nodule (at protein level).

In terms of biological role, probably participates in a plant defense mechanism. Not active against Gram-negative bacteria E.coli ATCC 700926, K.pneumoniae ATTC 13883 and P.aeruginosa ATCC 39018 at concentration up to 100 uM. Has cytotoxic and hemolytic activity. This chain is Cliotide T3, found in Clitoria ternatea (Butterfly pea).